The sequence spans 229 residues: Vacuolar protein-sorting-associated protein 60 (229 aa).

Residues 9–155 (NKKSHDQLLQ…QGDELQEVLA (147 aa)) are a coiled coil. Ser-12 bears the Phosphoserine mark. The segment at 128–159 (INIDKLQDMQDEMLDLIEQGDELQEVLAMNNN) is interaction with VTA1. A disordered region spans residues 186–229 (PTSENSLGNDMPSYLLGANAPPAFIDEEPNLDTEDKNKALESAQ). Residues 218-229 (TEDKNKALESAQ) show a composition bias toward basic and acidic residues.

The protein belongs to the SNF7 family. As to quaternary structure, interacts with VTA1; the interaction occurs at he endosomal membrane.

It localises to the endosome membrane. The protein localises to the vacuole membrane. Functionally, has a role in a late stage of multivesicular body (MVB) formation. Can stimulate VPS4 ATPase activity via VTA1. The sequence is that of Vacuolar protein-sorting-associated protein 60 (VPS60) from Saccharomyces cerevisiae (strain ATCC 204508 / S288c) (Baker's yeast).